We begin with the raw amino-acid sequence, 123 residues long: Small ribosomal subunit protein uS12 (123 aa).

A 3-methylthioaspartic acid modification is found at Asp89.

The protein belongs to the universal ribosomal protein uS12 family. In terms of assembly, part of the 30S ribosomal subunit. Contacts proteins S8 and S17. May interact with IF1 in the 30S initiation complex.

Its function is as follows. With S4 and S5 plays an important role in translational accuracy. Functionally, interacts with and stabilizes bases of the 16S rRNA that are involved in tRNA selection in the A site and with the mRNA backbone. Located at the interface of the 30S and 50S subunits, it traverses the body of the 30S subunit contacting proteins on the other side and probably holding the rRNA structure together. The combined cluster of proteins S8, S12 and S17 appears to hold together the shoulder and platform of the 30S subunit. The sequence is that of Small ribosomal subunit protein uS12 from Syntrophotalea carbinolica (strain DSM 2380 / NBRC 103641 / GraBd1) (Pelobacter carbinolicus).